The sequence spans 625 residues: Interleukin-1 receptor-associated kinase-like 2 (625 aa).

Residues 13–94 (LDDLCRNMDA…RAAQIILNWK (82 aa)) enclose the Death domain. The disordered stretch occupies residues 111–181 (KPEKPLAASV…SSDSKDFSTS (71 aa)). Position 144 is a phosphoserine (Ser-144). Positions 169 to 181 (LPTSSDSKDFSTS) are enriched in polar residues. One can recognise a Protein kinase domain in the interval 210 to 489 (FNQNRKISQG…LCLRRRNTSL (280 aa)). ATP contacts are provided by residues 216 to 224 (ISQGTFADV), Lys-237, and 337 to 340 (KSSN). The disordered stretch occupies residues 510 to 540 (LPWSGLSEGTGSSSNTPEETDDVDNSSLDAS). A compositionally biased stretch (polar residues) spans 516–526 (SEGTGSSSNTP).

This sequence belongs to the protein kinase superfamily. TKL Ser/Thr protein kinase family. Pelle subfamily. In terms of assembly, interacts with MYD88. IL-1 stimulation leads to the formation of a signaling complex which dissociates from the IL-1 receptor following the binding of PELI1. Expressed in spleen, thymus, prostate, lung, liver, skeletal muscle, kidney, pancreas and peripheral blood leukocytes.

Binds to the IL-1 type I receptor following IL-1 engagement, triggering intracellular signaling cascades leading to transcriptional up-regulation and mRNA stabilization. This chain is Interleukin-1 receptor-associated kinase-like 2 (IRAK2), found in Homo sapiens (Human).